A 170-amino-acid chain; its full sequence is Acireductone dioxygenase (170 aa).

Residues His99, His101, Glu105, and His144 each contribute to the Fe(2+) site. 4 residues coordinate Ni(2+): His99, His101, Glu105, and His144.

Belongs to the acireductone dioxygenase (ARD) family. In terms of assembly, monomer. It depends on Fe(2+) as a cofactor. The cofactor is Ni(2+).

It carries out the reaction 1,2-dihydroxy-5-(methylsulfanyl)pent-1-en-3-one + O2 = 3-(methylsulfanyl)propanoate + CO + formate + 2 H(+). The enzyme catalyses 1,2-dihydroxy-5-(methylsulfanyl)pent-1-en-3-one + O2 = 4-methylsulfanyl-2-oxobutanoate + formate + 2 H(+). The protein operates within amino-acid biosynthesis; L-methionine biosynthesis via salvage pathway; L-methionine from S-methyl-5-thio-alpha-D-ribose 1-phosphate: step 5/6. Catalyzes 2 different reactions between oxygen and the acireductone 1,2-dihydroxy-3-keto-5-methylthiopentene (DHK-MTPene) depending upon the metal bound in the active site. Fe-containing acireductone dioxygenase (Fe-ARD) produces formate and 2-keto-4-methylthiobutyrate (KMTB), the alpha-ketoacid precursor of methionine in the methionine recycle pathway. Ni-containing acireductone dioxygenase (Ni-ARD) produces methylthiopropionate, carbon monoxide and formate, and does not lie on the methionine recycle pathway. In Bacillus cereus (strain ATCC 10987 / NRS 248), this protein is Acireductone dioxygenase.